We begin with the raw amino-acid sequence, 331 residues long: L-lactate dehydrogenase A chain (331 aa).

NAD(+)-binding positions include 29–57 (GMVGMASAISILLKDLCDELAMVDVMEDK) and R98. Residues R105, N137, and R168 each coordinate substrate. An NAD(+)-binding site is contributed by N137. Catalysis depends on H192, which acts as the Proton acceptor. T247 lines the substrate pocket.

Belongs to the LDH/MDH superfamily. LDH family. Homotetramer.

The protein localises to the cytoplasm. The catalysed reaction is (S)-lactate + NAD(+) = pyruvate + NADH + H(+). Its pathway is fermentation; pyruvate fermentation to lactate; (S)-lactate from pyruvate: step 1/1. Functionally, interconverts simultaneously and stereospecifically pyruvate and lactate with concomitant interconversion of NADH and NAD(+). The sequence is that of L-lactate dehydrogenase A chain (ldha) from Champsocephalus gunnari (Mackerel icefish).